Here is a 326-residue protein sequence, read N- to C-terminus: Endo-beta-1,4-glucanase A (326 aa).

A signal peptide spans 1–19; that stretch reads MRSLVLLSSVLALVAPSKG. Glu150 functions as the Proton donor in the catalytic mechanism. The active-site Nucleophile is the Glu257.

It belongs to the glycosyl hydrolase 5 (cellulase A) family.

Its subcellular location is the secreted. The catalysed reaction is Endohydrolysis of (1-&gt;4)-beta-D-glucosidic linkages in cellulose, lichenin and cereal beta-D-glucans.. Functionally, has endoglucanase activity on substrates containing beta-1,4 glycosidic bonds, like in carboxymethylcellulose (CMC), hydroxyethylcellulose (HEC) and beta-glucan. Involved in the degradation of complex natural cellulosic substrates. This chain is Endo-beta-1,4-glucanase A (eglA), found in Emericella nidulans (strain FGSC A4 / ATCC 38163 / CBS 112.46 / NRRL 194 / M139) (Aspergillus nidulans).